Consider the following 410-residue polypeptide: Gamma-glutamyl phosphate reductase (410 aa).

It belongs to the gamma-glutamyl phosphate reductase family.

The protein localises to the cytoplasm. It catalyses the reaction L-glutamate 5-semialdehyde + phosphate + NADP(+) = L-glutamyl 5-phosphate + NADPH + H(+). It participates in amino-acid biosynthesis; L-proline biosynthesis; L-glutamate 5-semialdehyde from L-glutamate: step 2/2. Catalyzes the NADPH-dependent reduction of L-glutamate 5-phosphate into L-glutamate 5-semialdehyde and phosphate. The product spontaneously undergoes cyclization to form 1-pyrroline-5-carboxylate. The sequence is that of Gamma-glutamyl phosphate reductase from Campylobacter jejuni subsp. jejuni serotype O:23/36 (strain 81-176).